The chain runs to 248 residues: Transcription factor cicD (248 aa).

Basic and acidic residues predominate over residues 1-22 (MVGSRHPDQCAKRWHHSLDPNV). Residues 1-25 (MVGSRHPDQCAKRWHHSLDPNVKRG) are disordered. The HTH myb-type domain occupies 19 to 74 (DPNVKRGPWTMEEDSSLLEAVQKIGRDWKEIGRELFPSRSTTDIKNRYVILSRRRG). The H-T-H motif DNA-binding region spans 46 to 70 (WKEIGRELFPSRSTTDIKNRYVILS). Residues 186 to 208 (SELEGSFTSRNHEEPPQPLPVPD) are disordered.

It localises to the nucleus. Functionally, transcription factor that regulates the expression of the gene cluster that mediates the biosynthesis of cichorine, a phytotoxin active against knapweed, corn, and soybeans. The polypeptide is Transcription factor cicD (Emericella nidulans (strain FGSC A4 / ATCC 38163 / CBS 112.46 / NRRL 194 / M139) (Aspergillus nidulans)).